A 393-amino-acid polypeptide reads, in one-letter code: Chalcone synthase (393 aa).

C164 is an active-site residue.

Belongs to the thiolase-like superfamily. Chalcone/stilbene synthases family.

It carries out the reaction (E)-4-coumaroyl-CoA + 3 malonyl-CoA + 3 H(+) = 2',4,4',6'-tetrahydroxychalcone + 3 CO2 + 4 CoA. Its pathway is secondary metabolite biosynthesis; flavonoid biosynthesis. The primary product of this enzyme is 4,2',4',6'-tetrahydroxychalcone (also termed naringenin-chalcone or chalcone) which can under specific conditions spontaneously isomerize into naringenin. The polypeptide is Chalcone synthase (CHS) (Vitis vinifera (Grape)).